The chain runs to 668 residues: Major S-layer protein (668 aa).

The first 24 residues, Met-1–Ala-24, serve as a signal peptide directing secretion. Asn-36, Asn-65, Asn-111, Asn-265, Asn-583, Asn-596, Asn-602, Asn-608, Asn-617, and Asn-635 each carry an N-linked (GlcNAc...) asparagine glycan. Residues Glu-584–Val-650 are disordered. A compositionally biased stretch (polar residues) spans Asn-596–Ser-611. Over residues Glu-631–Glu-641 the composition is skewed to acidic residues. A helical membrane pass occupies residues Gly-644 to Val-664.

The protein belongs to the Methanosarcinales S-layer protein family. Post-translationally, glycosylated.

It localises to the secreted. It is found in the cell wall. The protein resides in the S-layer. Its subcellular location is the cell membrane. In terms of biological role, S-layer protein. The S-layer is a paracrystalline mono-layered assembly of proteins which coat the surface of the cell. This is Major S-layer protein from Methanosarcina barkeri (strain Fusaro / DSM 804).